The chain runs to 399 residues: Accessory Sec system protein translocase subunit SecY2 (399 aa).

The next 10 membrane-spanning stretches (helical) occupy residues 14–34, 60–80, 102–122, 128–148, 152–172, 184–204, 238–258, 272–292, 335–355, and 362–382; these read ILFT…SIVG, LNVF…IMLL, IITI…YIHN, SNII…VWLA, ITYG…KSLF, VLLL…LLFI, ISIM…NLIA, FANP…SYLL, WTGA…TLLV, and IYFS…GETI.

It belongs to the SecY/SEC61-alpha family. SecY2 subfamily. In terms of assembly, component of the accessory SecA2/SecY2 protein translocase complex required to export cell wall proteins. May form heterotrimers with SecE and SecG subunits.

The protein localises to the cell membrane. Functionally, part of the accessory SecA2/SecY2 system specifically required for export of possible cell wall proteins. The central subunit of a protein translocation channel. In Staphylococcus haemolyticus (strain JCSC1435), this protein is Accessory Sec system protein translocase subunit SecY2.